Here is a 212-residue protein sequence, read N- to C-terminus: Thymidylate kinase (212 aa).

Residue 10-17 (GLEGAGKT) coordinates ATP.

This sequence belongs to the thymidylate kinase family.

It catalyses the reaction dTMP + ATP = dTDP + ADP. Its function is as follows. Phosphorylation of dTMP to form dTDP in both de novo and salvage pathways of dTTP synthesis. This chain is Thymidylate kinase, found in Photorhabdus laumondii subsp. laumondii (strain DSM 15139 / CIP 105565 / TT01) (Photorhabdus luminescens subsp. laumondii).